A 224-amino-acid chain; its full sequence is Inhibitor of apoptosis protein (224 aa).

One copy of the BIR repeat lies at 29–92 (IDARNQSFAI…GFWSRNCGFM (64 aa)). Residues cysteine 62, cysteine 65, histidine 82, and cysteine 89 each coordinate Zn(2+).

This sequence belongs to the asfivirus IAP family. Interacts with subunit p17 of host CASP3.

It localises to the host cytoplasm. The protein resides in the virion. Its function is as follows. Prevent apoptosis of host cell by inhibiting caspase-3/CASP3 activation to promote the viral replication. Also induces the activation of host NF-kappaB. The polypeptide is Inhibitor of apoptosis protein (p27) (African swine fever virus (isolate Pig/Haiti/H811/1981) (ASFV)).